The chain runs to 474 residues: Dipeptidase A (474 aa).

The active site involves cysteine 6.

It belongs to the peptidase C69 family. As to quaternary structure, homooctamer.

It catalyses the reaction an L-aminoacyl-L-amino acid + H2O = 2 an L-alpha-amino acid. Its activity is regulated as follows. Inhibited by Zn(2+), Cu(2+), Ca(2+) and Cd(2+). Its function is as follows. Hydrolyzes a wide range of dipeptides but unable to hydrolyze dipeptides containing proline. Highest activity against Met-Ala. In Lactobacillus helveticus (Lactobacillus suntoryeus), this protein is Dipeptidase A (pepDA).